An 868-amino-acid chain; its full sequence is DNA mismatch repair protein MutS (868 aa).

621-628 (GPNMGGKS) provides a ligand contact to ATP. The segment at 803–852 (LESGDGGDTGSAQLPLFGPEPVFPPPAQPEPEPDPIREAVENLDPDGLTP) is disordered. Residues 823 to 832 (PVFPPPAQPE) are compositionally biased toward pro residues.

The protein belongs to the DNA mismatch repair MutS family.

This protein is involved in the repair of mismatches in DNA. It is possible that it carries out the mismatch recognition step. This protein has a weak ATPase activity. The sequence is that of DNA mismatch repair protein MutS from Halorhodospira halophila (strain DSM 244 / SL1) (Ectothiorhodospira halophila (strain DSM 244 / SL1)).